Here is a 300-residue protein sequence, read N- to C-terminus: Haloalkane dehalogenase (300 aa).

An AB hydrolase-1 domain is found at 32–155 (AIVFQHGNPT…PAVRGVFQGF (124 aa)). Asp-109 acts as the Nucleophile in catalysis. Glu-133 functions as the Proton donor in the catalytic mechanism. His-273 functions as the Proton acceptor in the catalytic mechanism.

This sequence belongs to the haloalkane dehalogenase family. Type 2 subfamily. Monomer.

It catalyses the reaction 1-haloalkane + H2O = a halide anion + a primary alcohol + H(+). In terms of biological role, catalyzes hydrolytic cleavage of carbon-halogen bonds in halogenated aliphatic compounds, leading to the formation of the corresponding primary alcohols, halide ions and protons. The sequence is that of Haloalkane dehalogenase from Mycobacterium tuberculosis (strain ATCC 25177 / H37Ra).